Consider the following 1179-residue polypeptide: Protein turtle homolog A (1179 aa).

An N-terminal signal peptide occupies residues 1–20; it reads MIWCLRLTILSLILSQGADG. The Extracellular portion of the chain corresponds to 21–734; the sequence is RRKPEVVSVV…TQLPGLLPQP (714 aa). Ig-like domains are found at residues 24-124, 136-216, 226-318, 322-410, and 418-498; these read PEVV…DFAN, PQFQ…GSVT, PPVI…AYLT, PAQV…SPVT, and PAFI…VTIS. Cystine bridges form between Cys-41–Cys-108, Cys-158–Cys-206, Cys-248–Cys-301, Cys-344–Cys-395, and Cys-440–Cys-486. Residue Asn-188 is glycosylated (N-linked (GlcNAc...) asparagine). Fibronectin type-III domains follow at residues 507 to 611 and 623 to 718; these read SPHV…TTPA and PLSP…TSGL. N-linked (GlcNAc...) asparagine glycans are attached at residues Asn-513 and Asn-524. Residues 735–755 form a helical membrane-spanning segment; the sequence is VLAGVVGGVCFLGVAVLVSIL. At 756-1179 the chain is on the cytoplasmic side; that stretch reads AACLMNRRRA…ISYPEQATLL (424 aa). Positions 766–807 are disordered; that stretch reads ARRHRKRLRQDPPLIFSPRGRSGPHSAPGSDSPDSVTKFKLQ. A Phosphoserine modification is found at Ser-809. 4 disordered regions span residues 819 to 846, 869 to 895, 942 to 979, and 1016 to 1079; these read LWGEPARPPSPHPDSPLGRGPLPLEPIC, ERSEPRTSAKRLAQSLDCSSSSPSGVP, PPLEEPTPASPPDFMGSHPCPTSSFLPPPDSPPTNLRA, and APRG…KRRN. The segment covering 884–893 has biased composition (polar residues); the sequence is LDCSSSSPSG. Over residues 1020–1029 the composition is skewed to polar residues; sequence SLTSQSSGRG. Residues 1177 to 1179 carry the PDZ-binding motif; it reads TLL.

It belongs to the immunoglobulin superfamily. Turtle family. As to quaternary structure, interacts with SHANK1 and probably with MAGI2. As to expression, expressed in hippocampal neurons (at protein level).

It localises to the cell membrane. It is found in the synapse. In terms of biological role, functions in dendrite outgrowth and synapse maturation. This Rattus norvegicus (Rat) protein is Protein turtle homolog A (Igsf9).